The primary structure comprises 140 residues: MAYTNKVTISAAVATMMLFLAVTIVDAQSMPPMPKFNPVCALADLPNIVQLCYFNLDLTPSEECCNDLKSSSTIQVNCLCDNFIAHPSNGNISQARYDLVNSACGVADKFACKGGDASGGSTNKIAASMVLLGLVASLFF.

A signal peptide spans 1–27; that stretch reads MAYTNKVTISAAVATMMLFLAVTIVDA. Intrachain disulfides connect C40–C80, C52–C64, C65–C104, and C78–C112. N91 carries an N-linked (GlcNAc...) asparagine glycan. G115 carries GPI-anchor amidated glycine lipidation. The propeptide at 116–140 is removed in mature form; it reads DASGGSTNKIAASMVLLGLVASLFF.

The protein belongs to the plant LTP family.

It is found in the cell membrane. Probable lipid transfer protein. The polypeptide is Non-specific lipid transfer protein GPI-anchored 33 (Arabidopsis thaliana (Mouse-ear cress)).